The primary structure comprises 874 residues: Bifunctional uridylyltransferase/uridylyl-removing enzyme (874 aa).

Residues 1 to 332 (MPLQSPLTFS…NGGATENAEI (332 aa)) form a uridylyltransferase region. The tract at residues 333–692 (LDADFQRRGS…ISKKATRGGT (360 aa)) is uridylyl-removing. In terms of domain architecture, HD spans 451–573 (VDEHSIRLLK…VRDEESLEYL (123 aa)). 2 consecutive ACT domains span residues 693–777 (EVFV…RTPN) and 800–874 (LMEF…AVTA).

Belongs to the GlnD family. It depends on Mg(2+) as a cofactor.

It carries out the reaction [protein-PII]-L-tyrosine + UTP = [protein-PII]-uridylyl-L-tyrosine + diphosphate. It catalyses the reaction [protein-PII]-uridylyl-L-tyrosine + H2O = [protein-PII]-L-tyrosine + UMP + H(+). With respect to regulation, uridylyltransferase (UTase) activity is inhibited by glutamine, while glutamine activates uridylyl-removing (UR) activity. Modifies, by uridylylation and deuridylylation, the PII regulatory proteins (GlnB and homologs), in response to the nitrogen status of the cell that GlnD senses through the glutamine level. Under low glutamine levels, catalyzes the conversion of the PII proteins and UTP to PII-UMP and PPi, while under higher glutamine levels, GlnD hydrolyzes PII-UMP to PII and UMP (deuridylylation). Thus, controls uridylylation state and activity of the PII proteins, and plays an important role in the regulation of nitrogen assimilation and metabolism. In Vibrio parahaemolyticus serotype O3:K6 (strain RIMD 2210633), this protein is Bifunctional uridylyltransferase/uridylyl-removing enzyme.